The chain runs to 298 residues: HTH-type transcriptional regulator ArgP (298 aa).

The HTH lysR-type domain occupies 4-60 (LDYKWIEALDAVVAQGGFERAAEELYISQSAVSQRIKQLERFLAQSVLIREQPPKPT). A DNA-binding region (H-T-H motif) is located at residues 21 to 40 (FERAAEELYISQSAVSQRIK).

The protein belongs to the LysR transcriptional regulatory family. As to quaternary structure, homodimer.

In terms of biological role, controls the transcription of genes involved in arginine and lysine metabolism. The chain is HTH-type transcriptional regulator ArgP from Vibrio vulnificus (strain YJ016).